A 331-amino-acid chain; its full sequence is Anthranilate phosphoribosyltransferase (331 aa).

Residues Gly-79, Gly-82–Asp-83, Thr-87, Asn-89–Thr-92, Lys-107–Ser-115, and Ala-119 contribute to the 5-phospho-alpha-D-ribose 1-diphosphate site. Gly-79 provides a ligand contact to anthranilate. Ser-91 is a Mg(2+) binding site. An anthranilate-binding site is contributed by Asn-110. An anthranilate-binding site is contributed by Arg-165. Asp-223 and Glu-224 together coordinate Mg(2+).

The protein belongs to the anthranilate phosphoribosyltransferase family. In terms of assembly, homodimer. It depends on Mg(2+) as a cofactor.

The enzyme catalyses N-(5-phospho-beta-D-ribosyl)anthranilate + diphosphate = 5-phospho-alpha-D-ribose 1-diphosphate + anthranilate. Its pathway is amino-acid biosynthesis; L-tryptophan biosynthesis; L-tryptophan from chorismate: step 2/5. Its function is as follows. Catalyzes the transfer of the phosphoribosyl group of 5-phosphorylribose-1-pyrophosphate (PRPP) to anthranilate to yield N-(5'-phosphoribosyl)-anthranilate (PRA). This Bacteroides fragilis (strain ATCC 25285 / DSM 2151 / CCUG 4856 / JCM 11019 / LMG 10263 / NCTC 9343 / Onslow / VPI 2553 / EN-2) protein is Anthranilate phosphoribosyltransferase.